We begin with the raw amino-acid sequence, 181 residues long: RNA pyrophosphohydrolase (181 aa).

The Nudix hydrolase domain maps to 6 to 150 (GYRPNVGIII…KCEVYRCALK (145 aa)). Positions 38–59 (GGIKEGETPEQAMYRELYEEVG) match the Nudix box motif.

Belongs to the Nudix hydrolase family. RppH subfamily. A divalent metal cation serves as cofactor.

Functionally, accelerates the degradation of transcripts by removing pyrophosphate from the 5'-end of triphosphorylated RNA, leading to a more labile monophosphorylated state that can stimulate subsequent ribonuclease cleavage. In Psychromonas ingrahamii (strain DSM 17664 / CCUG 51855 / 37), this protein is RNA pyrophosphohydrolase.